The following is an 89-amino-acid chain: Meiosis expressed gene 1 protein homolog (89 aa).

Belongs to the MEIG1 family.

The polypeptide is Meiosis expressed gene 1 protein homolog (Nematostella vectensis (Starlet sea anemone)).